A 106-amino-acid polypeptide reads, in one-letter code: MVNVPKTRRTFCKKCGKHQPHKVTQYKKGKDSLYAQGKRRYDRKQSGYGGQTKPIFRKKAKTTKKIVLRLECVEPNCRSKRMLAIKRCKHFELGGDKKRKGQVIQF.

The interval 34 to 53 (YAQGKRRYDRKQSGYGGQTK) is disordered.

It belongs to the eukaryotic ribosomal protein eL42 family. As to quaternary structure, component of the large ribosomal subunit.

It is found in the cytoplasm. Component of the large ribosomal subunit. The ribosome is a large ribonucleoprotein complex responsible for the synthesis of proteins in the cell. This chain is Large ribosomal subunit protein eL42 (Rpl36a), found in Canis lupus familiaris (Dog).